The primary structure comprises 213 residues: Uridine kinase (213 aa).

Residue 15-22 (GASASGKS) participates in ATP binding.

It belongs to the uridine kinase family.

The protein resides in the cytoplasm. The enzyme catalyses uridine + ATP = UMP + ADP + H(+). It carries out the reaction cytidine + ATP = CMP + ADP + H(+). It functions in the pathway pyrimidine metabolism; CTP biosynthesis via salvage pathway; CTP from cytidine: step 1/3. It participates in pyrimidine metabolism; UMP biosynthesis via salvage pathway; UMP from uridine: step 1/1. In Sodalis glossinidius (strain morsitans), this protein is Uridine kinase.